The chain runs to 360 residues: MDFSTNGSEESELYHAQIHLYKHVYNFVSSMALKSAMELGIADAIHNHGKPMTLPELSSSLKLHPSKVNILYRFLRLLTHNGFFAKTTVKSNEGEEETAYVLTPSSKLLVSGKSTCLSSLVKGALHPSSLDMWGVSKKWFHEDKEQTLFECATGENYWDFLNKDSDSLSMFQDAMAADSRLFKLAIQENKHVFEGLESLVDVAGGTGGVAKLIHEAFPHIKCTVFDQPQVVGNLTGNENLNFVGGDMFKSVPSADAVLLKWVLHDWNDELSLKILKNSKEAISHKGKDGKVIIIDISIDENSDDRGLTELQLEYDVVMLTMFLGKERTKKEWEKLIYDAGFSRYKITPICGFKSLIEVYP.

Residues 202-205, aspartate 226, 226-227, 246-247, and lysine 260 each bind S-adenosyl-L-methionine; these read VAGG, DQ, and DM. Histidine 264 serves as the catalytic Proton acceptor.

This sequence belongs to the class I-like SAM-binding methyltransferase superfamily. Cation-independent O-methyltransferase family. COMT subfamily.

It catalyses the reaction (+)-6a-hydroxymaackiain + S-adenosyl-L-methionine = (+)-pisatin + S-adenosyl-L-homocysteine + H(+). It carries out the reaction a 4'-hydroxyisoflavone + S-adenosyl-L-methionine = a 4'-methoxyisoflavone + S-adenosyl-L-homocysteine + H(+). Methyltransferase involved in the phytoalexin pisatin biosynthesis. Has both 3- and 4'-O-methyltransferase activities. Can use (+)-6a-hydroxymaackiain, 2,7,4'-trihydroxyisoflavanone and with much less activity (+)-medicarpin as substrates, but not (-)-6a-hydroxymaackiain, daidzein, formononetin or isoliquiritigenin. May be involved in formononetin biosynthesis. This chain is (+)-6a-hydroxymaackiain 3-O-methyltransferase 1 (HMM1), found in Pisum sativum (Garden pea).